We begin with the raw amino-acid sequence, 236 residues long: Small ribosomal subunit protein uS3 (236 aa).

The region spanning 39 to 107 (IREVLEKQLK…EVHLNIVEVR (69 aa)) is the KH type-2 domain. The disordered stretch occupies residues 214–236 (ASERRALEGGDSGGGRSRRDDRG).

It belongs to the universal ribosomal protein uS3 family. In terms of assembly, part of the 30S ribosomal subunit. Forms a tight complex with proteins S10 and S14.

Binds the lower part of the 30S subunit head. Binds mRNA in the 70S ribosome, positioning it for translation. This Parvibaculum lavamentivorans (strain DS-1 / DSM 13023 / NCIMB 13966) protein is Small ribosomal subunit protein uS3.